Consider the following 92-residue polypeptide: UPF0235 protein PYRAB05010 (92 aa).

The protein belongs to the UPF0235 family.

The protein is UPF0235 protein PYRAB05010 of Pyrococcus abyssi (strain GE5 / Orsay).